The chain runs to 666 residues: Endogenous retrovirus group K member 24 Gag polyprotein (666 aa).

The N-myristoyl glycine moiety is linked to residue Gly-2. The interval 165-264 is disordered; the sequence is GKGPELVGPS…APPSRQGSEL (100 aa). A compositionally biased stretch (pro residues) spans 232–247; that stretch reads GMPPAPQGRAPYPQPP. 2 consecutive CCHC-type zinc fingers follow at residues 544-561 and 580-597; these read GKCY…NCPV and DLCP…QCRS. Residues 598–641 are disordered; the sequence is KFDKNGQPLSGNEQRGQPQAPQQTGAFPIQPFVPQGFQGQQPPL. A compositionally biased stretch (polar residues) spans 604 to 622; it reads QPLSGNEQRGQPQAPQQTG. A compositionally biased stretch (low complexity) spans 624-640; that stretch reads FPIQPFVPQGFQGQQPP.

This sequence belongs to the beta type-B retroviral Gag protein family. HERV class-II K(HML-2) gag subfamily. In terms of processing, myristoylation is essential for retroviral assembly. Alteration of the glycine residue leads to a block in the budding of particles and an accumulation of Gag inside the cell. Specific enzymatic cleavages may yield mature proteins.

The protein resides in the cell membrane. In terms of biological role, the products of the Gag polyproteins of infectious retroviruses perform highly complex orchestrated tasks during the assembly, budding, maturation, and infection stages of the viral replication cycle. During viral assembly, the proteins form membrane associations and self-associations that ultimately result in budding of an immature virion from the infected cell. Gag precursors also function during viral assembly to selectively bind and package two plus strands of genomic RNA. Endogenous Gag proteins may have kept, lost or modified their original function during evolution. In Homo sapiens (Human), this protein is Endogenous retrovirus group K member 24 Gag polyprotein (ERVK-24).